Consider the following 628-residue polypeptide: Monoterpene synthase like 2, chloroplastic (628 aa).

The Mg(2+) site is built by aspartate 379, aspartate 383, and aspartate 531. The DDXXD motif signature appears at 379-383 (DDIYD).

It belongs to the terpene synthase family. Tpsd subfamily. The cofactor is Mg(2+). Mn(2+) serves as cofactor.

The protein resides in the plastid. It is found in the chloroplast. The protein operates within terpene metabolism; oleoresin biosynthesis. It functions in the pathway secondary metabolite biosynthesis; terpenoid biosynthesis. Functionally, monoterpene synthase (TPS) involved in the biosynthesis of monoterpene natural products included in conifer oleoresin secretions and volatile emissions; these compounds contribute to biotic and abiotic stress defense against herbivores and pathogens. In Pinus banksiana (Jack pine), this protein is Monoterpene synthase like 2, chloroplastic.